The sequence spans 269 residues: 1,6-dihydroxycyclohexa-2,4-diene-1-carboxylate dehydrogenase (269 aa).

11-35 (VITGAAQGIGRRVAERMAAEGGRLL) is an NAD(+) binding site. Ser142 serves as a coordination point for substrate. Tyr153 serves as the catalytic Proton acceptor.

Belongs to the short-chain dehydrogenases/reductases (SDR) family. In terms of assembly, homodimer.

It carries out the reaction (1R,6S)-1,6-dihydroxycyclohexa-2,4-diene-1-carboxylate + NAD(+) = catechol + CO2 + NADH. It functions in the pathway aromatic compound metabolism; benzoate degradation via hydroxylation; catechol from benzoate: step 2/2. Degradation of 2-hydro-1,2-dihydroxy benzoate (DHB) to catechol. The sequence is that of 1,6-dihydroxycyclohexa-2,4-diene-1-carboxylate dehydrogenase (xylL) from Pseudomonas putida (Arthrobacter siderocapsulatus).